We begin with the raw amino-acid sequence, 430 residues long: Glutamate-1-semialdehyde 2,1-aminomutase (430 aa).

Lysine 265 carries the N6-(pyridoxal phosphate)lysine modification.

Belongs to the class-III pyridoxal-phosphate-dependent aminotransferase family. HemL subfamily. In terms of assembly, homodimer. The cofactor is pyridoxal 5'-phosphate.

The protein localises to the cytoplasm. It catalyses the reaction (S)-4-amino-5-oxopentanoate = 5-aminolevulinate. Its pathway is porphyrin-containing compound metabolism; protoporphyrin-IX biosynthesis; 5-aminolevulinate from L-glutamyl-tRNA(Glu): step 2/2. This chain is Glutamate-1-semialdehyde 2,1-aminomutase, found in Shewanella sp. (strain ANA-3).